Reading from the N-terminus, the 252-residue chain is MRDRCMLSFTKEQLTSVGEYCTLHSSPLPKSVEEQCRVTDERSQDEVVMAPSPAQCAWLMSFALASRPRRILELGTFTGVSTLAFYEGTRKTKAEIITVDMSEEYLQIAETAFRRHGATDRIQTIRGPCLEILPTITGEFDLIYIDAAEEEYEAYTRFVLDHKLLSAEGVMLVDDGTYIRWFYFFQANWWSVLLEGLVVDRSIVKEFPEEIQEPYLGIADQMNDFNRYARSDPRVEVTMIPLFNGVTQITWK.

Residues glutamate 73, glycine 75–threonine 76, serine 81, and aspartate 100 each bind S-adenosyl-L-methionine.

It belongs to the class I-like SAM-binding methyltransferase superfamily. Cation-dependent O-methyltransferase family.

It participates in secondary metabolite biosynthesis. O-methyltransferase; part of the gene cluster that mediates the biosynthesis of hancockiamides, an unusual new family of N-cinnamoylated piperazines. The NRPS hkm10 and the NmrA-like reductase hkm9 are proposed to convert two molecules of L-Phe to the intermediary piperazine called xenocockiamide A. Xenocockiamide A is then converted to hancockiamide D via a series of hydroxylations and O-methylations. The tyrosinase hkm6 may catalyze an aromatic hydroxylation, then the 2-oxoglutarate-dependent Fe(II) dioxygenase hkm4 and the FAD-dependent phenol hydroxylase hkm7 may catalyze consecutive hydroxylations to install 2 more hydroxy groups, and the methyltransferase hkm8 probably catalyzes two methylations using 2 molecules of S-adenosyl-L-methionine (SAM). The NRPS hkm11 activates and transfers trans-cinnamate supplied by the PAL hkm12 to hancockiamide D and produces hancockiamide A. NRPS Hkm11 has the flexibility to tolerate the bulky hancockiamide G as a substrate and the absence of the acetyl-transferase hkm3 opens up the opportunity for hkm11 to introduce a second N-cinnamoyl moiety. The cytochrome P450 monooxygenase hkm5 catalyzes the methylenedioxy bridge formation, converting hancockiamide A into hancockiamide G. Hkm5 can also convert hancockiamide B into hancockiamide C, and hancockiamide D into hancockiamide H. The N-acetyltransferase hkm3 finally transfers an acetyl group to 1-N of piperazine, converting hancockiamide A into hancockiamide B and hancockiamide G into hancockiamide C. In Aspergillus hancockii, this protein is O-methyltransferase hkm8.